A 196-amino-acid chain; its full sequence is DnaA initiator-associating protein DiaA (196 aa).

Residues 34-196 form the SIS domain; the sequence is LVHSLLNGNK…DNTLFLHQDD (163 aa).

This sequence belongs to the SIS family. DiaA subfamily. In terms of assembly, homotetramer; dimer of dimers.

Required for the timely initiation of chromosomal replication via direct interactions with the DnaA initiator protein. In Salmonella paratyphi A (strain ATCC 9150 / SARB42), this protein is DnaA initiator-associating protein DiaA.